The sequence spans 655 residues: Tetratricopeptide repeat protein 30 homolog (655 aa).

TPR repeat units lie at residues glutamate 10–arginine 43, alanine 44–glutamate 76, alanine 143–asparagine 176, leucine 178–asparagine 210, leucine 385–valine 418, serine 450–aspartate 484, and cysteine 534–asparagine 567.

This sequence belongs to the TTC30/dfy-1/fleer family.

It localises to the cell projection. The protein resides in the cilium. Functionally, required for polyglutamylation of axonemal tubulin in sensory cilia. Plays a role in anterograde intraflagellar transport (IFT), the process by which cilia precursors are transported from the base of the cilium to the site of their incorporation at the tip. The sequence is that of Tetratricopeptide repeat protein 30 homolog from Drosophila melanogaster (Fruit fly).